Here is a 417-residue protein sequence, read N- to C-terminus: MFANISLSEFDPELAKSIEAEDARQEAHIELIASENYCSPAVMEAQGSKLTNKYAEGYPGKRYYGGCEYVDVIEQLAIDRAKALFGADYANVQPHAGSQANSAVYLALLNAGDTVLGMSLAHGGHLTHGAKVNFSGKTYNAVQYGLNPETGEIDYDEVERLAIEHKPRMIVAGFSAYSRIVDWQRFRDIADKVGAYLFVDMAHVAGLVAAGVYPSPVQIADVTTTTTHKTLRGPRSGLILAKANEEIEKKLQSAVFPGNQGGPLVHAIAAKAVCFKEAMAPEYKAYQQQVVKNAQAMAEVLIARGYDIVSGGTDNHLFLLSLIKQDVTGKEADAWLGNANITVNKNAVPNDPRSPFVTSGIRIGTPAVTTRGFGEAEVRDLASWIADVLDSKGDEKVIADVKAKVEAVCAKFPVYEN.

(6S)-5,6,7,8-tetrahydrofolate-binding positions include L120 and G124–L126. N6-(pyridoxal phosphate)lysine is present on K229. Position 354 to 356 (S354 to F356) interacts with (6S)-5,6,7,8-tetrahydrofolate.

The protein belongs to the SHMT family. In terms of assembly, homodimer. The cofactor is pyridoxal 5'-phosphate.

Its subcellular location is the cytoplasm. The enzyme catalyses (6R)-5,10-methylene-5,6,7,8-tetrahydrofolate + glycine + H2O = (6S)-5,6,7,8-tetrahydrofolate + L-serine. It functions in the pathway one-carbon metabolism; tetrahydrofolate interconversion. The protein operates within amino-acid biosynthesis; glycine biosynthesis; glycine from L-serine: step 1/1. Functionally, catalyzes the reversible interconversion of serine and glycine with tetrahydrofolate (THF) serving as the one-carbon carrier. This reaction serves as the major source of one-carbon groups required for the biosynthesis of purines, thymidylate, methionine, and other important biomolecules. Also exhibits THF-independent aldolase activity toward beta-hydroxyamino acids, producing glycine and aldehydes, via a retro-aldol mechanism. The polypeptide is Serine hydroxymethyltransferase (Acinetobacter baylyi (strain ATCC 33305 / BD413 / ADP1)).